Here is a 398-residue protein sequence, read N- to C-terminus: Lipase member K (398 aa).

The signal sequence occupies residues 1–19 (MWWLLATTCCVLLSGPIDG). One can recognise an AB hydrolase-1 domain in the interval 78-377 (VVYLQHGLIA…HYNHMDFYLG (300 aa)). Residue Ser171 is the Nucleophile of the active site. Cys245 and Cys254 form a disulfide bridge. N-linked (GlcNAc...) asparagine glycans are attached at residues Asn270 and Asn326. Active-site charge relay system residues include Asp342 and His371.

Belongs to the AB hydrolase superfamily. Lipase family.

The protein localises to the secreted. Functionally, plays a highly specific role in the last step of keratinocyte differentiation. May have an essential function in lipid metabolism of the most differentiated epidermal layers. The sequence is that of Lipase member K (Lipk) from Mus musculus (Mouse).